Here is a 688-residue protein sequence, read N- to C-terminus: Elongation factor G (688 aa).

In terms of domain architecture, tr-type G spans 8–282; sequence EKFRNFGIMA…GVVDYLPSPL (275 aa). GTP is bound by residues 17 to 24, 81 to 85, and 135 to 138; these read AHIDAGKT, DTPGH, and NKMD.

It belongs to the TRAFAC class translation factor GTPase superfamily. Classic translation factor GTPase family. EF-G/EF-2 subfamily.

It localises to the cytoplasm. Its function is as follows. Catalyzes the GTP-dependent ribosomal translocation step during translation elongation. During this step, the ribosome changes from the pre-translocational (PRE) to the post-translocational (POST) state as the newly formed A-site-bound peptidyl-tRNA and P-site-bound deacylated tRNA move to the P and E sites, respectively. Catalyzes the coordinated movement of the two tRNA molecules, the mRNA and conformational changes in the ribosome. This chain is Elongation factor G, found in Clostridium perfringens (strain ATCC 13124 / DSM 756 / JCM 1290 / NCIMB 6125 / NCTC 8237 / Type A).